The primary structure comprises 573 residues: Membrane protein insertase YidC (573 aa).

6 helical membrane-spanning segments follow: residues 6–26 (VFLI…WGKD), 355–375 (FSIM…LHSF), 379–399 (WGWA…PLSA), 446–466 (GGCL…WVLV), 488–508 (PYFI…KLTP), and 524–544 (PLVF…YWVV).

This sequence belongs to the OXA1/ALB3/YidC family. Type 1 subfamily. Interacts with the Sec translocase complex via SecD. Specifically interacts with transmembrane segments of nascent integral membrane proteins during membrane integration.

It localises to the cell inner membrane. Its function is as follows. Required for the insertion and/or proper folding and/or complex formation of integral membrane proteins into the membrane. Involved in integration of membrane proteins that insert both dependently and independently of the Sec translocase complex, as well as at least some lipoproteins. Aids folding of multispanning membrane proteins. This is Membrane protein insertase YidC from Xanthomonas campestris pv. campestris (strain ATCC 33913 / DSM 3586 / NCPPB 528 / LMG 568 / P 25).